Here is a 235-residue protein sequence, read N- to C-terminus: 2,3,4,5-tetrahydropyridine-2,6-dicarboxylate N-acetyltransferase (235 aa).

Belongs to the transferase hexapeptide repeat family. DapH subfamily.

The enzyme catalyses (S)-2,3,4,5-tetrahydrodipicolinate + acetyl-CoA + H2O = L-2-acetamido-6-oxoheptanedioate + CoA. Its pathway is amino-acid biosynthesis; L-lysine biosynthesis via DAP pathway; LL-2,6-diaminopimelate from (S)-tetrahydrodipicolinate (acetylase route): step 1/3. Catalyzes the transfer of an acetyl group from acetyl-CoA to tetrahydrodipicolinate. This is 2,3,4,5-tetrahydropyridine-2,6-dicarboxylate N-acetyltransferase from Anoxybacillus flavithermus (strain DSM 21510 / WK1).